Here is a 417-residue protein sequence, read N- to C-terminus: WD repeat and FYVE domain-containing protein 2 (417 aa).

WD repeat units lie at residues 29 to 68 (GHVA…QFWP), 119 to 157 (CHAG…NKVG), 202 to 241 (AHTN…GEAY), and 245 to 284 (GHNG…VETP). The FYVE-type zinc-finger motif lies at 286–357 (WKTSDCCQKC…ICNDCAGRMK (72 aa)). Zn(2+) contacts are provided by Cys-292, Cys-295, Cys-319, Cys-322, Cys-327, Cys-330, Cys-349, and Cys-352. A WD 5 repeat occupies 373–412 (EIRTGITAMHLQETLGLLVTSGQNRVVMIWDVRSVCSAPS).

Its function is as follows. Plays a role in coelomocyte endocytosis. In Caenorhabditis briggsae, this protein is WD repeat and FYVE domain-containing protein 2.